Reading from the N-terminus, the 333-residue chain is Taste receptor type 2 member 123 (333 aa).

At 1 to 13 (MFSQKINYSHLFT) the chain is on the extracellular side. Asn-7 carries N-linked (GlcNAc...) asparagine glycosylation. Residues 14 to 34 (FSITLYVEIVTGILGHGFIAL) form a helical membrane-spanning segment. Residues 35-60 (VNIMDWVKRRRISSVDQILTALALTR) lie on the Cytoplasmic side of the membrane. A helical membrane pass occupies residues 61-81 (FIYVLSMLICILLFMLCPHLP). The Extracellular portion of the chain corresponds to 82–90 (RRSEMLSAM). The helical transmembrane segment at 91–111 (GIFWVVNSHFSIWLTTCLGVF) threads the bilayer. The Cytoplasmic portion of the chain corresponds to 112 to 134 (YFLKIANFSNSFFLYLKWRVKKV). A helical membrane pass occupies residues 135 to 155 (ILIIILASLIFLTLHILSLGI). Over 156 to 205 (YDQFSIAAYVGNMSYSLTDLTQFSSTFLFSNSSNVFLITNSSHVFLPINS) the chain is Extracellular. Asn-167, Asn-186, and Asn-195 each carry an N-linked (GlcNAc...) asparagine glycan. The helical transmembrane segment at 206 to 226 (LFMLIPFTVSLVAFLMLIFSL) threads the bilayer. Over 227 to 253 (WKHHKKMQVNAKQPRDVSTMAHIKALQ) the chain is Cytoplasmic. Residues 254–274 (TVFSFLLLYAIYLLFLIIGIL) form a helical membrane-spanning segment. Residues 275 to 281 (NLGLMEK) are Extracellular-facing. The chain crosses the membrane as a helical span at residues 282 to 302 (IVILIFDHISGAVFPISHSFV). The Cytoplasmic segment spans residues 303–333 (LILGNSKLRQASLSVLPCLRCQSKDMDTMGL).

This sequence belongs to the G-protein coupled receptor T2R family. In terms of tissue distribution, expressed in subsets of taste receptor cells of the tongue and palate epithelium and exclusively in gustducin-positive cells. Expressed in the duodenum, antrum and fundus (part of the stomach).

It is found in the membrane. Its function is as follows. Gustducin-coupled receptor implicated in the perception of bitter compounds in the oral cavity and the gastrointestinal tract. Signals through PLCB2 and the calcium-regulated cation channel TRPM5. This Mus musculus (Mouse) protein is Taste receptor type 2 member 123 (Tas2r123).